A 185-amino-acid chain; its full sequence is NOP protein chaperone 1 (185 aa).

Phosphoserine is present on residues serine 34, serine 66, and serine 177. Positions 121–185 are disordered; that stretch reads SRSDSKEEDS…DSPASKKKKQ (65 aa).

As to quaternary structure, interacts with NOP58, RUVBL1 and RUVBL2; the interactions are direct and NOPCHAP1 bridges the association of NOP58 with RUVBL1:RUVBL2 even in absence of snoRNAs. The interactions with RUVBL1 and RUVBL2 are disrupted upon ATP binding.

The protein localises to the nucleus. Client-loading PAQosome/R2TP complex cofactor that selects NOP58 to promote box C/D small nucleolar ribonucleoprotein (snoRNP) assembly. Acts as a bridge between NOP58 and the R2TP complex via RUVBL1:RUVBL2. This Mus musculus (Mouse) protein is NOP protein chaperone 1.